A 197-amino-acid chain; its full sequence is Small ribosomal subunit protein eS1 (197 aa).

The protein belongs to the eukaryotic ribosomal protein eS1 family.

The polypeptide is Small ribosomal subunit protein eS1 (Sulfolobus acidocaldarius (strain ATCC 33909 / DSM 639 / JCM 8929 / NBRC 15157 / NCIMB 11770)).